Reading from the N-terminus, the 509-residue chain is Histidine--tRNA ligase, cytoplasmic (509 aa).

Ala2 is modified (N-acetylalanine). Residues 3-59 (ERAALEELVKLQGERVRGLKQQKASAELIEEEVAKLLKLKAQLGPDESKQKFVLKTP) form the WHEP-TRS domain. At Ser66 the chain carries Phosphoserine. Residues 130–132 (DLT), Arg157, Gln173, Asp177, Arg326, and 330–331 (YY) contribute to the L-histidine site. Ser356 is modified (phosphoserine).

Belongs to the class-II aminoacyl-tRNA synthetase family. As to quaternary structure, homodimer.

The protein localises to the cytoplasm. It carries out the reaction tRNA(His) + L-histidine + ATP = L-histidyl-tRNA(His) + AMP + diphosphate + H(+). Catalyzes the ATP-dependent ligation of histidine to the 3'-end of its cognate tRNA, via the formation of an aminoacyl-adenylate intermediate (His-AMP). Plays a role in axon guidance. The sequence is that of Histidine--tRNA ligase, cytoplasmic (HARS1) from Pongo abelii (Sumatran orangutan).